Consider the following 382-residue polypeptide: Histone acetyltransferase type B subunit 2 (382 aa).

WD repeat units follow at residues 98-138 (ENNA…RYSH), 141-181 (PHTK…TTFK), 184-224 (IQKD…VVSQ), 228-268 (ESSN…ENSG), and 275-315 (GHSE…EEQQ). An interaction with the histone H4 N-terminus region spans residues 317 to 321 (EDAED). One copy of the WD 6 repeat lies at 332–372 (GHTAGVSDLSWCPFKDWMIGSVADDNIVHLWEISKKLITNE).

This sequence belongs to the WD repeat RBAP46/RBAP48/MSI1 family. Component of the HAT-B complex composed of at least HAT1 and HAT2. The HAT-B complex binds to histone H4 tail.

The protein localises to the cytoplasm. The protein resides in the nucleus. Regulatory subunit of the histone acetylase B (HAT-B) complex. The complex acetylates 'Lys-14' of histone H4 which is required for telomeric silencing. The sequence is that of Histone acetyltransferase type B subunit 2 (HAT2) from Candida albicans (strain SC5314 / ATCC MYA-2876) (Yeast).